A 407-amino-acid chain; its full sequence is MSNGIDKVVLAYSGGLDTSIILKWLQDEYQCEVVAFCADLGQAEELEPARAKAEKFGVKEIYIDDLKEEFVRDFVFPMYRANTLYEGVYHLGTSIARPLIAKRQIEIANATGAQAVSHGATGKGNDQVRFELGYYALRPDIRVIAPWREWDLTSRDKLFAYAEKHGIPVPTDKRGEVPYSMDRNLLHISFEGKALEDPWVEPDEEMFVLSVSPEKAPDQATYVELTFRQGDLVAIDDQEMSPATLLAKLNQLGGRNGIGRLDLVENRYVGMKSRGVYETPGGTILGVAHRAMESLTLDREVAHMKDELMPRYAKLIYNGYWFSPERAMLQTMIDASQTFVNGKVRVKLYKGNVVVVGRQSENSLFDPAIATFEDDKGAYNQADADGFIKLNALRMRIAAMLRNGPKV.

Residues A11–S19 and A38 each bind ATP. Residues Y89 and S94 each coordinate L-citrulline. G119 is an ATP binding site. 3 residues coordinate L-aspartate: T121, N125, and D126. N125 is a binding site for L-citrulline. Residues R129, S180, S189, E265, and Y277 each coordinate L-citrulline.

This sequence belongs to the argininosuccinate synthase family. Type 1 subfamily. Homotetramer.

It is found in the cytoplasm. It catalyses the reaction L-citrulline + L-aspartate + ATP = 2-(N(omega)-L-arginino)succinate + AMP + diphosphate + H(+). Its pathway is amino-acid biosynthesis; L-arginine biosynthesis; L-arginine from L-ornithine and carbamoyl phosphate: step 2/3. The chain is Argininosuccinate synthase from Magnetococcus marinus (strain ATCC BAA-1437 / JCM 17883 / MC-1).